The primary structure comprises 306 residues: Homoserine kinase (306 aa).

84–94 is an ATP binding site; sequence PAGLGLGSSGA.

This sequence belongs to the GHMP kinase family. Homoserine kinase subfamily.

It is found in the cytoplasm. The catalysed reaction is L-homoserine + ATP = O-phospho-L-homoserine + ADP + H(+). The protein operates within amino-acid biosynthesis; L-threonine biosynthesis; L-threonine from L-aspartate: step 4/5. Catalyzes the ATP-dependent phosphorylation of L-homoserine to L-homoserine phosphate. In Sulfurisphaera tokodaii (strain DSM 16993 / JCM 10545 / NBRC 100140 / 7) (Sulfolobus tokodaii), this protein is Homoserine kinase.